We begin with the raw amino-acid sequence, 376 residues long: Probable cysteine protease RDL3 (376 aa).

The N-terminal stretch at 1–27 (MAISFRTLALLTLSVLLISISLGVVTA) is a signal peptide. Positions 28–126 (TESQRNEGEV…ERYQYKEGDV (99 aa)) are cleaved as a propeptide — activation peptide. A glycan (N-linked (GlcNAc...) asparagine) is linked at asparagine 80. 2 disulfides stabilise this stretch: cysteine 149–cysteine 192 and cysteine 183–cysteine 226. The active site involves cysteine 152. Residue asparagine 270 is glycosylated (N-linked (GlcNAc...) asparagine). Cysteine 283 and cysteine 336 are oxidised to a cystine. Catalysis depends on residues histidine 290 and asparagine 311. N-linked (GlcNAc...) asparagine glycosylation occurs at asparagine 349.

Belongs to the peptidase C1 family. Expressed in root hairs.

In terms of biological role, probable thiol protease. The protein is Probable cysteine protease RDL3 of Arabidopsis thaliana (Mouse-ear cress).